Consider the following 930-residue polypeptide: Protein translocase subunit SecA (930 aa).

Residues Gln-87, 105 to 109, and Asp-515 contribute to the ATP site; that span reads GEGKT. Zn(2+) is bound by residues Cys-914, Cys-916, Cys-925, and His-926.

It belongs to the SecA family. In terms of assembly, monomer and homodimer. Part of the essential Sec protein translocation apparatus which comprises SecA, SecYEG and auxiliary proteins SecDF-YajC and YidC. It depends on Zn(2+) as a cofactor.

It localises to the cell inner membrane. Its subcellular location is the cytoplasm. It carries out the reaction ATP + H2O + cellular proteinSide 1 = ADP + phosphate + cellular proteinSide 2.. Functionally, part of the Sec protein translocase complex. Interacts with the SecYEG preprotein conducting channel. Has a central role in coupling the hydrolysis of ATP to the transfer of proteins into and across the cell membrane, serving both as a receptor for the preprotein-SecB complex and as an ATP-driven molecular motor driving the stepwise translocation of polypeptide chains across the membrane. The polypeptide is Protein translocase subunit SecA (Burkholderia vietnamiensis (strain G4 / LMG 22486) (Burkholderia cepacia (strain R1808))).